The sequence spans 195 residues: Guanylate kinase (195 aa).

A Guanylate kinase-like domain is found at Gly10–Ala189. Ala17–Ser24 lines the ATP pocket.

Belongs to the guanylate kinase family.

It is found in the cytoplasm. The catalysed reaction is GMP + ATP = GDP + ADP. Its function is as follows. Essential for recycling GMP and indirectly, cGMP. In Chlorobaculum tepidum (strain ATCC 49652 / DSM 12025 / NBRC 103806 / TLS) (Chlorobium tepidum), this protein is Guanylate kinase.